A 397-amino-acid polypeptide reads, in one-letter code: P2X purinoceptor 3 (397 aa).

Residues 1–20 are Cytoplasmic-facing; sequence MNCISDFFTYETTKSVVVKS. A helical membrane pass occupies residues 21 to 43; that stretch reads WTIGIINRAVQLLIISYFVGWVF. The Extracellular portion of the chain corresponds to 44–322; sequence LHEKAYQVRD…AGKFNIIPTI (279 aa). Residues K63 and K65 each coordinate ATP. Cystine bridges form between C107-C153, C116-C137, and C122-C147. Mg(2+) is bound at residue E111. N139 is a glycosylation site (N-linked (GlcNAc...) asparagine). D158 lines the Mg(2+) pocket. D158 provides a ligand contact to Ca(2+). An N-linked (GlcNAc...) asparagine glycan is attached at N170. Position 172 (T172) interacts with ATP. N-linked (GlcNAc...) asparagine glycosylation is present at N194. Disulfide bonds link C203–C213 and C247–C256. The ATP site is built by S275, N279, and R281. N290 carries N-linked (GlcNAc...) asparagine glycosylation. Residue K299 participates in ATP binding. A helical transmembrane segment spans residues 323 to 341; it reads ISSVAAFTSVGVGTVLCDI. Residues 342–397 are Cytoplasmic-facing; it reads ILLNFLKGADHYKARKFEEVTETTLKGTASTNPVFTSDQATVEKQSTDSGAYSIGH.

It belongs to the P2X receptor family. In terms of assembly, homotrimer. Forms heterotrimer with P2RX2. Heterotrimeric P2RX2/3 has a ligand dose-response profile that is distinct from either homotrimeric P2RX2 or P2RX3.

The protein resides in the cell membrane. It catalyses the reaction Ca(2+)(in) = Ca(2+)(out). It carries out the reaction Na(+)(in) = Na(+)(out). Has high sensitivity to ATP. Fast activation by external ATP. Exhibits rapid desensitization. Sensitives to the ATP agonist:alpha/beta-methylene-ATP. Subject to allosteric inhibition by AF-219. Mg(2+) and Ca(2+) slow deactivation of P2RX3. Functionally, extracellular ATP-activated non-selective cation channel. Plays particularly important role in sensory neurons where its activation is critical for gustatory, nociceptive responses, visceral reflexes and sensory hypersensitization. The chain is P2X purinoceptor 3 (P2rx3) from Mus musculus (Mouse).